The chain runs to 444 residues: Acyl-CoA (8-3)-desaturase (444 aa).

At Met1 the chain carries N-acetylmethionine. At 1–121 (MAPDPVAAKT…FRELRATVEQ (121 aa)) the chain is on the cytoplasmic side. The Cytochrome b5 heme-binding domain maps to 17 to 94 (PRYFTWDEVA…MNSLLIGELS (78 aa)). The helical transmembrane segment at 122 to 142 (MGLMKANHVFFLLYLLHILLL) threads the bilayer. Residues 143–146 (DGAA) are Lumenal-facing. Residues 147 to 167 (WLTLWIFGTSFLPFLLCAVLL) form a helical membrane-spanning segment. Residues 168-267 (TAAQIQAGWL…PYNHQHKYFF (100 aa)) are Cytoplasmic-facing. Residues 179 to 183 (HDLGH) carry the Histidine box-1 motif. The short motif at 216–220 (HFQHH) is the Histidine box-2 element. The helical transmembrane segment at 268–288 (LIGPPALVPFFFQWYVFYFVI) threads the bilayer. Topologically, residues 289–305 (QRKKWVDLAWMITFYIR) are lumenal. The helical transmembrane segment at 306-326 (LLLTYVPLLGLKAFLGLYFIV) threads the bilayer. Residues 327–444 (RFLESNWFVW…QLWLDAYLHQ (118 aa)) lie on the Cytoplasmic side of the membrane. Positions 382 to 386 (QIEHH) match the Histidine box-3 motif.

Belongs to the fatty acid desaturase type 1 family. In terms of tissue distribution, widely expressed. Expressed in brain, liver and thymus (at protein level). Isoform 1 seems to be more abundant than isoform 2. Expression of isoform 2 is very low in spleen and not detectable in skeletal muscle.

The protein resides in the endoplasmic reticulum membrane. The protein localises to the mitochondrion. It catalyses the reaction (8Z,11Z,14Z)-eicosatrienoyl-CoA + 2 Fe(II)-[cytochrome b5] + O2 + 2 H(+) = (5Z,8Z,11Z,14Z)-eicosatetraenoyl-CoA + 2 Fe(III)-[cytochrome b5] + 2 H2O. The catalysed reaction is (8Z,11Z,14Z,17Z)-eicosatetraenoyl-CoA + 2 Fe(II)-[cytochrome b5] + O2 + 2 H(+) = (5Z,8Z,11Z,14Z,17Z)-eicosapentaenoyl-CoA + 2 Fe(III)-[cytochrome b5] + 2 H2O. It carries out the reaction (11E)-octadecenoyl-CoA + 2 Fe(II)-[cytochrome b5] + O2 + 2 H(+) = (5Z,11E)-octadecadienoyl-CoA + 2 Fe(III)-[cytochrome b5] + 2 H2O. It functions in the pathway lipid metabolism; polyunsaturated fatty acid biosynthesis. In terms of biological role, acts as a front-end fatty acyl-coenzyme A (CoA) desaturase that introduces a cis double bond at carbon 5 located between a preexisting double bond and the carboxyl end of the fatty acyl chain. Involved in biosynthesis of highly unsaturated fatty acids (HUFA) from the essential polyunsaturated fatty acids (PUFA) linoleic acid (LA) (18:2n-6) and alpha-linolenic acid (ALA) (18:3n-3) precursors. Specifically, desaturates dihomo-gamma-linoleoate (DGLA) (20:3n-6) and eicosatetraenoate (ETA) (20:4n-3) to generate arachidonate (AA) (20:4n-6) and eicosapentaenoate (EPA) (20:5n-3), respectively. As a rate limiting enzyme for DGLA (20:3n-6) and AA (20:4n-6)-derived eicosanoid biosynthesis, controls the metabolism of inflammatory lipids like prostaglandin E2, critical for efficient acute inflammatory response and maintenance of epithelium homeostasis. Contributes to membrane phospholipid biosynthesis by providing AA (20:4n-6) as a major acyl chain esterified into phospholipids. In particular, regulates phosphatidylinositol-4,5-bisphosphate levels, modulating inflammatory cytokine production in T-cells. Also desaturates (11E)-octadecenoate (trans-vaccenoate)(18:1n-9), a metabolite in the biohydrogenation pathway of LA (18:2n-6). Does not exhibit any catalytic activity toward 20:3n-6, but it may enhance FADS2 activity. This Papio anubis (Olive baboon) protein is Acyl-CoA (8-3)-desaturase.